We begin with the raw amino-acid sequence, 423 residues long: Adenylosuccinate synthetase (423 aa).

GTP is bound by residues 12–18 and 40–42; these read GDEGKGK and GHT. The Proton acceptor role is filled by aspartate 13. Residues aspartate 13 and glycine 40 each coordinate Mg(2+). IMP-binding positions include 13-16, 38-41, threonine 129, arginine 143, glutamine 224, threonine 239, and arginine 303; these read DEGK and NAGH. Histidine 41 serves as the catalytic Proton donor. Residue 299-305 participates in substrate binding; sequence SVTGRQR. Residues arginine 305, 331–333, and 412–414 each bind GTP; these read KGD and SVG.

Belongs to the adenylosuccinate synthetase family. In terms of assembly, homodimer. Requires Mg(2+) as cofactor.

Its subcellular location is the cytoplasm. The enzyme catalyses IMP + L-aspartate + GTP = N(6)-(1,2-dicarboxyethyl)-AMP + GDP + phosphate + 2 H(+). Its pathway is purine metabolism; AMP biosynthesis via de novo pathway; AMP from IMP: step 1/2. Its function is as follows. Plays an important role in the de novo pathway of purine nucleotide biosynthesis. Catalyzes the first committed step in the biosynthesis of AMP from IMP. The chain is Adenylosuccinate synthetase from Flavobacterium psychrophilum (strain ATCC 49511 / DSM 21280 / CIP 103535 / JIP02/86).